A 445-amino-acid polypeptide reads, in one-letter code: Putative aldehyde dehydrogenase AldX (445 aa).

Active-site residues include E214 and C248.

This sequence belongs to the aldehyde dehydrogenase family.

It catalyses the reaction an aldehyde + NAD(+) + H2O = a carboxylate + NADH + 2 H(+). This is Putative aldehyde dehydrogenase AldX (aldX) from Bacillus subtilis (strain 168).